The chain runs to 301 residues: NTE family protein RssA (301 aa).

One can recognise a PNPLA domain in the interval 8–168 (LALGSGAARG…VNPIPISLTR (161 aa)). Residues 39–43 (GCSIG) carry the GXSXG motif. S41 serves as the catalytic Nucleophile. The Proton acceptor role is filled by D155. The DGA/G signature appears at 155–157 (DGA).

This sequence belongs to the NTE family.

The protein is NTE family protein RssA (rssA) of Escherichia coli (strain K12).